Here is a 375-residue protein sequence, read N- to C-terminus: Chaperone protein DnaJ (375 aa).

The J domain maps to 6–71 (DYYEVLGVPK…EKRRQYDQFG (66 aa)). Residues 138–220 (GTTKKIDVTL…CYGTGYISSK (83 aa)) form a CR-type zinc finger. 8 residues coordinate Zn(2+): Cys151, Cys154, Cys168, Cys171, Cys194, Cys197, Cys208, and Cys211. CXXCXGXG motif repeat units follow at residues 151-158 (CSSCHGTG), 168-175 (CSKCGGRG), 194-201 (CPDCHGTG), and 208-215 (CPDCYGTG).

This sequence belongs to the DnaJ family. As to quaternary structure, homodimer. Requires Zn(2+) as cofactor.

The protein localises to the cytoplasm. Participates actively in the response to hyperosmotic and heat shock by preventing the aggregation of stress-denatured proteins and by disaggregating proteins, also in an autonomous, DnaK-independent fashion. Unfolded proteins bind initially to DnaJ; upon interaction with the DnaJ-bound protein, DnaK hydrolyzes its bound ATP, resulting in the formation of a stable complex. GrpE releases ADP from DnaK; ATP binding to DnaK triggers the release of the substrate protein, thus completing the reaction cycle. Several rounds of ATP-dependent interactions between DnaJ, DnaK and GrpE are required for fully efficient folding. Also involved, together with DnaK and GrpE, in the DNA replication of plasmids through activation of initiation proteins. The chain is Chaperone protein DnaJ from Lachnospira eligens (strain ATCC 27750 / DSM 3376 / VPI C15-48 / C15-B4) (Eubacterium eligens).